Consider the following 192-residue polypeptide: Phosphoheptose isomerase (192 aa).

The region spanning 35–192 (LIETLENQGK…CIERHFAHKN (158 aa)) is the SIS domain. 50–52 (NGG) is a binding site for substrate. Zn(2+) is bound by residues H59 and E63. Residues E63, 92 to 93 (ND), 118 to 120 (STS), S123, and Q170 each bind substrate. Zn(2+)-binding residues include Q170 and H178.

This sequence belongs to the SIS family. GmhA subfamily. As to quaternary structure, homotetramer. Requires Zn(2+) as cofactor.

It localises to the cytoplasm. The enzyme catalyses 2 D-sedoheptulose 7-phosphate = D-glycero-alpha-D-manno-heptose 7-phosphate + D-glycero-beta-D-manno-heptose 7-phosphate. Its pathway is carbohydrate biosynthesis; D-glycero-D-manno-heptose 7-phosphate biosynthesis; D-glycero-alpha-D-manno-heptose 7-phosphate and D-glycero-beta-D-manno-heptose 7-phosphate from sedoheptulose 7-phosphate: step 1/1. In terms of biological role, catalyzes the isomerization of sedoheptulose 7-phosphate in D-glycero-D-manno-heptose 7-phosphate. This chain is Phosphoheptose isomerase, found in Helicobacter pylori (strain HPAG1).